The primary structure comprises 231 residues: Orotidine 5'-phosphate decarboxylase (231 aa).

Substrate contacts are provided by residues aspartate 11, lysine 33, aspartate 60–threonine 69, threonine 119, arginine 181, glutamine 190, glycine 210, and arginine 211. The Proton donor role is filled by lysine 62.

This sequence belongs to the OMP decarboxylase family. Type 1 subfamily. As to quaternary structure, homodimer.

It catalyses the reaction orotidine 5'-phosphate + H(+) = UMP + CO2. It functions in the pathway pyrimidine metabolism; UMP biosynthesis via de novo pathway; UMP from orotate: step 2/2. Functionally, catalyzes the decarboxylation of orotidine 5'-monophosphate (OMP) to uridine 5'-monophosphate (UMP). The sequence is that of Orotidine 5'-phosphate decarboxylase from Malacoplasma penetrans (strain HF-2) (Mycoplasma penetrans).